Consider the following 125-residue polypeptide: ATP synthase epsilon chain (125 aa).

Belongs to the ATPase epsilon chain family. As to quaternary structure, F-type ATPases have 2 components, CF(1) - the catalytic core - and CF(0) - the membrane proton channel. CF(1) has five subunits: alpha(3), beta(3), gamma(1), delta(1), epsilon(1). CF(0) has three main subunits: a, b and c.

The protein resides in the cell inner membrane. Its function is as follows. Produces ATP from ADP in the presence of a proton gradient across the membrane. The chain is ATP synthase epsilon chain from Aliarcobacter butzleri (strain RM4018) (Arcobacter butzleri).